Consider the following 616-residue polypeptide: MGYLVVIGVIACVAYGILQVVSTVLPRLLLVPSQNWQDKIKKEIEQPMVRYLKVGNKRSSYRRRLVLASKQPSFYTNFVNNKIKVASVDSQNDEGEFLAEMKKRDVRDPQRKIIYGFFHPYANNGGGGERVLWQAVQATLATSDRNIVAIYTTNYESDPTSILDKVEAKFQISRLDEDRIVFVYLRKYARLIDGDYWKRFTLIGQLFGSMVLSWEAMFELSPDVWIDTIGLPGSYLLVSLVLKIPIMSYVHYPIIQPEMFNKLKFQGLSQIRVPKLSEIKTDVFSIGKLIYWSGVFYFYKYLGSLVNITLANGSWTFNHISNIWTINKDEAGYEMDILYPPCGTETLTKNVETLGSRENKLLFIAQFRPEKRHSLILRQYSKFLVNATSIGTPLKNIPTLVFLGSCRTPDDTKTLHDLKQEVDDLELNGYVEFVVDCSYEDIMVWLSKVKFGLNAMWNEHFGIGVVEYMSRGVIPLCHASAGPLLDIVTNWDNEPTSVSWYNNTGFFFKDKSDPDFDLSLQSDTASEFLQFSSRDNKDSTSTYPTLARLLDELFITNPDLISETRLQSMRENGVKSVLEKFSNGVFTLKWMQYSNQLGDLEKSYREERRSGIEKVY.

Met1 is a topological domain (lumenal). A helical membrane pass occupies residues 2-21 (GYLVVIGVIACVAYGILQVV). At 22–199 (STVLPRLLLV…RLIDGDYWKR (178 aa)) the chain is on the cytoplasmic side. Positions 200–220 (FTLIGQLFGSMVLSWEAMFEL) form an intramembrane region, helical. At 221-460 (SPDVWIDTIG…FGLNAMWNEH (240 aa)) the chain is on the cytoplasmic side. The segment at residues 461-481 (FGIGVVEYMSRGVIPLCHASA) is an intramembrane region (helical). At 482–616 (GPLLDIVTNW…ERRSGIEKVY (135 aa)) the chain is on the cytoplasmic side.

It belongs to the glycosyltransferase group 1 family.

The protein resides in the endoplasmic reticulum membrane. It carries out the reaction an alpha-D-Man-(1-&gt;3)-[alpha-D-Man-(1-&gt;6)]-beta-D-Man-(1-&gt;4)-beta-D-GlcNAc-(1-&gt;4)-alpha-D-GlcNAc-diphospho-di-trans,poly-cis-dolichol + 2 GDP-alpha-D-mannose = an alpha-D-Man-(1-&gt;2)-alpha-D-Man-(1-&gt;2)-alpha-D-Man-(1-&gt;3)-[alpha-D-Man-(1-&gt;6)]-beta-D-Man-(1-&gt;4)-beta-D-GlcNAc-(1-&gt;4)-alpha-D-GlcNAc-diphospho-di-trans,poly-cis-dolichol + 2 GDP + 2 H(+). It participates in protein modification; protein glycosylation. In terms of biological role, GDP-Man:Man(3)GlcNAc(2)-PP-Dol alpha-1,2-mannosyltransferase that operates in the biosynthetic pathway of dolichol-linked oligosaccharides, the glycan precursors employed in protein asparagine (N)-glycosylation. The assembly of dolichol-linked oligosaccharides begins on the cytosolic side of the endoplasmic reticulum membrane and finishes in its lumen. The sequential addition of sugars to dolichol pyrophosphate produces dolichol-linked oligosaccharides containing fourteen sugars, including two GlcNAcs, nine mannoses and three glucoses. Once assembled, the oligosaccharide is transferred from the lipid to nascent proteins by oligosaccharyltransferases. Catalyzes, on the cytoplasmic face of the endoplasmic reticulum, the addition of the fourth and fifth mannose residues to the dolichol-linked oligosaccharide chain, to produce Man(5)GlcNAc(2)-PP-dolichol core oligosaccharide. This Debaryomyces hansenii (strain ATCC 36239 / CBS 767 / BCRC 21394 / JCM 1990 / NBRC 0083 / IGC 2968) (Yeast) protein is GDP-Man:Man(3)GlcNAc(2)-PP-Dol alpha-1,2-mannosyltransferase (ALG11).